The sequence spans 88 residues: uncharacterized protein (88 aa).

Transmembrane regions (helical) follow at residues 13-33 (FLAF…GWGP) and 62-82 (WFNI…ITGI).

It localises to the cell membrane. This is an uncharacterized protein from Bacillus subtilis (strain 168).